Reading from the N-terminus, the 716-residue chain is Probable calcium-binding mitochondrial carrier K02F3.2 (716 aa).

The segment at 1 to 345 is N-terminal domain; the sequence is MSFDHLLTSS…CLKDIQAIDP (345 aa). 4 consecutive EF-hand domains span residues 93–121, 127–162, 165–195, and 198–233; these read YNKE…FCAF, SPDA…TQPL, QDFD…CQLL, and FYEE…VKGH. 9 residues coordinate Ca(2+): aspartate 106, threonine 108, aspartate 110, glutamate 117, aspartate 140, asparagine 142, serine 144, threonine 146, and glutamate 151. The Ca(2+) site is built by aspartate 211, asparagine 213, asparagine 215, threonine 217, and aspartate 222. Residues 346–362 are linker loop domain; it reads ERLKRVSQMDRLINIKA. The tract at residues 372–664 is carrier domain; it reads GTAFLESAYR…RLFYVDFAGS (293 aa). Solcar repeat units follow at residues 376–468, 475–560, and 568–656; these read LESA…MRDK, IPLY…AKLA, and NSPG…LQRL. 6 consecutive transmembrane segments (helical) span residues 382 to 399, 443 to 462, 485 to 498, 535 to 554, 574 to 591, and 631 to 650; these read FLLG…VYPI, GLLP…LTMN, GTGG…TNPL, GSRA…FPAY, FASA…VTPA, and GTAA…LLTY. The segment at 665–716 is C-terminal domain; the sequence is RPTGSELATTKTIQDESSTNPDHVGGYKLAAATFSGIEHKFGLFLPKFETSK.

This sequence belongs to the mitochondrial carrier (TC 2.A.29) family. In terms of assembly, homodimer (via N-terminus).

It is found in the mitochondrion inner membrane. Its function is as follows. Mitochondrial and calcium-binding carrier that catalyzes the calcium-dependent exchange of cytoplasmic glutamate with mitochondrial aspartate across the mitochondrial inner membrane. This is Probable calcium-binding mitochondrial carrier K02F3.2 from Caenorhabditis elegans.